We begin with the raw amino-acid sequence, 540 residues long: L-aspartate oxidase (540 aa).

FAD-binding positions include 16–19 (SGAA), Lys-38, 45–52 (STFYAQGG), and Asp-223. Catalysis depends on Arg-290, which acts as the Proton donor/acceptor. FAD-binding positions include Glu-375 and 391–392 (SL).

It belongs to the FAD-dependent oxidoreductase 2 family. NadB subfamily. The cofactor is FAD.

Its subcellular location is the cytoplasm. It carries out the reaction L-aspartate + O2 = iminosuccinate + H2O2. It catalyses the reaction fumarate + L-aspartate = iminosuccinate + succinate. The protein operates within cofactor biosynthesis; NAD(+) biosynthesis; iminoaspartate from L-aspartate (oxidase route): step 1/1. Catalyzes the oxidation of L-aspartate to iminoaspartate, the first step in the de novo biosynthesis of NAD(+). Can use either oxygen or fumarate as electron acceptors, which allows the enzyme to be functional under aerobic and anaerobic conditions. The polypeptide is L-aspartate oxidase (nadB) (Escherichia coli O157:H7).